A 528-amino-acid polypeptide reads, in one-letter code: Na(+)/H(+) antiporter NhaB (528 aa).

A run of 10 helical transmembrane segments spans residues 20 to 39 (WFKI…FYFN), 66 to 86 (PGGL…SQVL), 97 to 117 (LLLV…LFVF), 139 to 159 (AFLS…TVAV), 241 to 261 (IRMS…CFLV), 304 to 324 (AVIG…VGLI), 349 to 369 (EEAL…AVII), 390 to 410 (LVIF…VFVG), 448 to 468 (ATPN…APLI), and 476 to 496 (VWMA…AIQL).

It belongs to the NhaB Na(+)/H(+) (TC 2.A.34) antiporter family.

It localises to the cell inner membrane. It catalyses the reaction 2 Na(+)(in) + 3 H(+)(out) = 2 Na(+)(out) + 3 H(+)(in). Functionally, na(+)/H(+) antiporter that extrudes sodium in exchange for external protons. This chain is Na(+)/H(+) antiporter NhaB, found in Shewanella pealeana (strain ATCC 700345 / ANG-SQ1).